The following is a 2774-amino-acid chain: Teneurin-2 (2774 aa).

In terms of domain architecture, Teneurin N-terminal spans 1 to 375; that stretch reads MDVKDRRHRS…KPSKYCSWKC (375 aa). Over 1-379 the chain is Cytoplasmic; it reads MDVKDRRHRS…YCSWKCAALS (379 aa). Serine 90 and serine 124 each carry phosphoserine. The tract at residues 111–271 is disordered; the sequence is TGSDADSDTE…HHHSSANSLN (161 aa). Residues 141–155 are compositionally biased toward polar residues; that stretch reads SSGLSSRENSALTLT. Position 155 is a phosphothreonine (threonine 155). Residue serine 157 is modified to Phosphoserine. A compositionally biased stretch (basic and acidic residues) spans 159 to 168; sequence NENKSDDDNG. A compositionally biased stretch (low complexity) spans 174-188; that stretch reads TSSSSLLPSAQLPSS. The segment covering 202–211 has biased composition (polar residues); sequence DSNTSHQIMD. The segment covering 229–240 has biased composition (low complexity); the sequence is SGPQQASSSGPP. Residues 380-400 form a helical membrane-spanning segment; the sequence is AIAAALLLAILLAYFIAMHLL. The Extracellular portion of the chain corresponds to 401–2774; that stretch reads GLNWQLQPAD…FLRQNEMGKR (2374 aa). Asparagine 443 and asparagine 482 each carry an N-linked (GlcNAc...) asparagine glycan. EGF-like domains follow at residues 575–603, 605–634, 636–668, 669–701, 702–735, 738–766, 769–797, and 808–841; these read DCPR…ADCA, AACP…AECD, PMNQ…EHCE, EVDC…NCEL, ARVQ…PDCS, VCSV…AACD, VCHP…EHCT, and DGCP…PGCN. Disulfide bonds link cysteine 576-cysteine 586, cysteine 580-cysteine 591, cysteine 593-cysteine 602, cysteine 611-cysteine 622, cysteine 624-cysteine 633, cysteine 640-cysteine 651, cysteine 645-cysteine 656, cysteine 658-cysteine 667, cysteine 672-cysteine 683, cysteine 677-cysteine 688, cysteine 690-cysteine 699, cysteine 710-cysteine 723, cysteine 725-cysteine 734, cysteine 739-cysteine 749, cysteine 743-cysteine 754, cysteine 756-cysteine 765, cysteine 770-cysteine 780, cysteine 774-cysteine 785, cysteine 787-cysteine 796, cysteine 810-cysteine 820, cysteine 814-cysteine 829, and cysteine 831-cysteine 840. N-linked (GlcNAc...) asparagine glycans are attached at residues asparagine 925, asparagine 948, and asparagine 1267. NHL repeat units lie at residues 1272 to 1316, 1342 to 1386, 1401 to 1452, 1474 to 1501, and 1530 to 1573; these read LELR…VKSL, ARCG…NGII, LSCD…IAGR, LESA…INRL, and CYSG…VSKN. The YD 1 repeat unit spans residues 1583–1602; the sequence is YEAASPGEQELYVFNADGIH. N-linked (GlcNAc...) asparagine glycosylation occurs at asparagine 1616. 3 YD repeats span residues 1619 to 1639, 1682 to 1701, and 1702 to 1724; these read YSAD…LKIR, YDGN…WTTF, and YDYD…TSLH. N-linked (GlcNAc...) asparagine glycosylation is found at asparagine 1712, asparagine 1749, asparagine 1773, asparagine 1807, and asparagine 1892. YD repeat units lie at residues 1895–1914, 1936–1954, 1955–1975, 1982–1999, 2000–2021, 2022–2039, 2042–2062, 2065–2085, 2093–2113, 2119–2136, 2137–2163, 2165–2178, 2179–2202, 2205–2225, 2226–2246, 2248–2268, 2280–2300, and 2302–2322; these read YFFN…ERTD, YLDK…YIFE, YDSS…HSMS, YIRN…VIFD, YSDD…VFYK, YGKL…TAVT, YDET…FSCT, YRKV…EGMI, YHDN…TPLP, YDEI…GVIY, YDIN…IKEV, YEMF…MTVQ, YDSM…TKYT, YDGD…WRYS, YDLN…LMPL, YDLR…DDDG, YNSK…SVQY, and YDGV…LQYF. N-linked (GlcNAc...) asparagine glycosylation is present at asparagine 1993. A glycan (N-linked (GlcNAc...) asparagine) is linked at asparagine 2197. Asparagine 2337 carries N-linked (GlcNAc...) asparagine glycosylation. A YD 23 repeat occupies 2348–2389; the sequence is YDLQGHLFAMESSSGEEYYVASDNTGTPLAVFSINGLMIKQL. Asparagine 2648 is a glycosylation site (N-linked (GlcNAc...) asparagine).

It belongs to the tenascin family. Teneurin subfamily. Homodimer; disulfide-linked. Heterodimer with either TENM1 or TENM3. May also form heterodimer with TENM4. Interacts with ADGRL1 isoform 2. Post-translationally, derives from the membrane form by proteolytic processing. In terms of processing, derives from the plasma membrane form by proteolytic cleavage and translocates to the nucleus. Homophilic binding of the C-terminal extracellular domain stimulates its proteolytic cleavage and release in the cytoplasmic. Is subjected to rapid degradation by the proteasome pathway. In terms of tissue distribution, expressed in the brain (at protein level).

It is found in the cell membrane. Its subcellular location is the presynaptic cell membrane. The protein localises to the postsynaptic cell membrane. The protein resides in the endoplasmic reticulum. It localises to the golgi apparatus. It is found in the synapse. Its subcellular location is the cell projection. The protein localises to the dendritic spine. The protein resides in the filopodium. It localises to the growth cone. It is found in the nucleus. Its subcellular location is the PML body. Its function is as follows. Involved in neural development, regulating the establishment of proper connectivity within the nervous system. Acts as a ligand of the ADGRL1 and ADGRL3 receptors that are expressed at the surface of adjacent cells. Promotes the formation of filopodia and enlarged growth cone in neuronal cells. Mediates axon guidance and homophilic and heterophilic cell-cell adhesion. May function as a cellular signal transducer. Functionally, induces gene transcription inhibition. This chain is Teneurin-2 (Tenm2), found in Rattus norvegicus (Rat).